The sequence spans 1186 residues: DNA excision repair protein ERCC-5 (1186 aa).

The interval 1–78 is N-domain; it reads MGVQGLWKLL…RIRPIFVFDG (78 aa). Lysine 8 carries the N6-acetyllysine modification. Aspartate 30 is a Mg(2+) binding site. A DNA-binding; may bind to the undamaged single-strand DNA of the DNA repair bubble region spans residues 31–67; the sequence is ISIWLNQALKGVRDRHGNSIENPHLLTLFHRLCKLLF. Position 77 (aspartate 77) interacts with Mg(2+). Residues 79–785 form a spacer region region; that stretch reads DAPLLKKQTL…LRLFGIPYIQ (707 aa). 5 disordered regions span residues 306–342, 354–385, 404–473, 510–533, and 667–724; these read ESLPSSSKMHGMSFDVKSSPCEKLKTEKEPDATPPSP, GSSSEEELESENRRQARGRNAPAAVDEGSISP, CAGD…SVPK, HSDAPGLPNGRELTPASPTCTNSV, and QAEF…AEDS. Basic and acidic residues predominate over residues 325–336; that stretch reads PCEKLKTEKEPD. Phosphoserine is present on serine 384. The span at 454–472 shows a compositional bias: basic and acidic residues; that stretch reads AEEHVASTNEGREPTDSVP. Serine 705 is modified (phosphoserine). The I-domain stretch occupies residues 786-881; it reads APMEAEAQCA…VTAMEILNEF (96 aa). The Mg(2+) site is built by glutamate 789, glutamate 791, aspartate 810, and aspartate 812. The interval 820–836 is DNA-binding; may bind to the undamaged single-strand DNA of the DNA repair bubble; sequence HVYRNFFNKNKFVEYYQ. The interval 848 to 880 is DNA-binding; H2TH (helix-2turn-helix) motif which binds double-stranded DNA; that stretch reads RNKLINLAYLLGSDYTEGIPTVGCVTAMEILNE. Aspartate 861 contacts Mg(2+). The tract at residues 912-918 is DNA-binding; may bind double-stranded DNA; it reads TKVKKKL. An interaction with PCNA region spans residues 981–1009; that stretch reads LKQLDAQQTQLRIDSFFRLAQQEKEDAKR. An interaction with ERCC6/CSB region spans residues 1011–1186; that stretch reads KSQRLNRAVT…RRARGRKRKT (176 aa). Disordered regions lie at residues 1056–1081 and 1095–1186; these read QKRGITNTLEESSSLKRKRLSDSKGK and ESSD…KRKT. The Nuclear localization signal 1 motif lies at 1057–1074; it reads KRGITNTLEESSSLKRKR. The segment covering 1124-1133 has biased composition (polar residues); that stretch reads TSASDSQNSV. The Nuclear localization signal 2 motif lies at 1169–1186; it reads FGKKRRKLRRARGRKRKT. A compositionally biased stretch (basic residues) spans 1169–1186; the sequence is FGKKRRKLRRARGRKRKT.

Belongs to the XPG/RAD2 endonuclease family. XPG subfamily. As to quaternary structure, monomer. Homodimer. Component of the homologous recombination repair (HR) complex composed of ERCC5/XPG, BRCA2, PALB2, DSS1 and RAD51. Within the complex, interacts with BRCA2 and PALB2. Interacts with RNA polymerase II. Interacts (via C-terminus) with ERCC6/CSB; the interaction stimulates ERCC6/CSB binding to the DNA repair bubble and ERCC6/CSB ATPase activity. May form a complex composed of RNA polymerase II, ERCC6/CSB and ERCC5/XPG which associates with the DNA repair bubble during transcription-coupled nucleotide excision repair. Interacts with BRCA1; the interaction promotes the release of BRCA1 from DNA. Interacts with PCNA. Interacts with NTHL1; the interaction stimulates NTHL1 activity and NTHL1 binding to its DNA substrate. Mg(2+) is required as a cofactor.

The protein localises to the nucleus. Its subcellular location is the chromosome. Single-stranded structure-specific DNA endonuclease involved in DNA excision repair. Makes the 3'incision in DNA nucleotide excision repair (NER). Binds and bends DNA repair bubble substrate and breaks base stacking at the single-strand/double-strand DNA junction of the DNA bubble. Plays a role in base excision repair (BER) by promoting the binding of DNA glycosylase NTHL1 to its substrate and increasing NTHL1 catalytic activity that removes oxidized pyrimidines from DNA. Involved in transcription-coupled nucleotide excision repair (TCR) which allows RNA polymerase II-blocking lesions to be rapidly removed from the transcribed strand of active genes. Functions during the initial step of TCR in cooperation with ERCC6/CSB to recognized stalled RNA polymerase II. Also, stimulates ERCC6/CSB binding to the DNA repair bubble and ERCC6/CSB ATPase activity. Required for DNA replication fork maintenance and preservation of genomic stability. Involved in homologous recombination repair (HRR) induced by DNA replication stress by recruiting RAD51, BRCA2, and PALB2 to the damaged DNA site. In TFIIH stimulates the 5'-3' helicase activity of XPD/ERCC2 and the DNA translocase activity of XPB/ERCC3. During HRR, binds to the replication fork with high specificity and stabilizes it. Also, acts upstream of HRR, to promote the release of BRCA1 from DNA. The protein is DNA excision repair protein ERCC-5 (ERCC5) of Homo sapiens (Human).